The primary structure comprises 527 residues: Catalase (527 aa).

A compositionally biased stretch (basic and acidic residues) spans 1-22; the sequence is MADNRDPASDQMKHWKEQRAAQ. Residues 1–42 are disordered; that stretch reads MADNRDPASDQMKHWKEQRAAQKPDVLTTGGGNPVGDKLNSL. A2 is modified (blocked amino end (Ala); alternate). A2 carries the N-acetylalanine; alternate modification. S9 carries the phosphoserine modification. Residue K13 is modified to N6-succinyllysine. Catalysis depends on residues H75 and N148. 6 residues coordinate NADP(+): H194, F198, S201, R203, N213, and Y215. K221 carries the N6-succinyllysine modification. K233 is subject to N6-acetyllysine. Positions 237, 303, and 305 each coordinate NADP(+). Y358 is a heme binding site. A phosphoserine mark is found at S417 and S434. Positions 442, 445, and 446 each coordinate NADP(+). N6-acetyllysine; alternate occurs at positions 449 and 480. An N6-succinyllysine; alternate mark is found at K449 and K480. K499 is subject to N6-acetyllysine. Phosphothreonine is present on T511. S517 carries the phosphoserine modification. The Microbody targeting signal; atypical signature appears at 524–527; the sequence is KANL.

It belongs to the catalase family. Homotetramer. Interacts (via microbody targeting signal) with PEX5, monomeric form interacts with PEX5, leading to its translocation into peroxisomes. The cofactor is heme. NADP(+) serves as cofactor.

It is found in the peroxisome matrix. It catalyses the reaction 2 H2O2 = O2 + 2 H2O. Its function is as follows. Catalyzes the degradation of hydrogen peroxide (H(2)O(2)) generated by peroxisomal oxidases to water and oxygen, thereby protecting cells from the toxic effects of hydrogen peroxide. Promotes growth of cells including T-cells, B-cells, myeloid leukemia cells, melanoma cells, mastocytoma cells and normal and transformed fibroblast cells. The chain is Catalase (CAT) from Bos taurus (Bovine).